Reading from the N-terminus, the 213-residue chain is Ribonuclease HII (213 aa).

The 212-residue stretch at 2-213 (GRVAGIDEAG…KEWATWKRLR (212 aa)) folds into the RNase H type-2 domain. Asp8, Glu9, and Asp113 together coordinate a divalent metal cation.

Belongs to the RNase HII family. Mn(2+) serves as cofactor. The cofactor is Mg(2+).

The protein localises to the cytoplasm. It carries out the reaction Endonucleolytic cleavage to 5'-phosphomonoester.. Functionally, endonuclease that specifically degrades the RNA of RNA-DNA hybrids. The sequence is that of Ribonuclease HII from Thermofilum pendens (strain DSM 2475 / Hrk 5).